A 410-amino-acid chain; its full sequence is Peptidase T (410 aa).

Residue H79 coordinates Zn(2+). The active site involves D81. Residue D142 coordinates Zn(2+). E176 serves as the catalytic Proton acceptor. Residues E177, D199, and H381 each contribute to the Zn(2+) site.

It belongs to the peptidase M20B family. Requires Zn(2+) as cofactor.

It is found in the cytoplasm. The catalysed reaction is Release of the N-terminal residue from a tripeptide.. In terms of biological role, cleaves the N-terminal amino acid of tripeptides. The protein is Peptidase T of Bacillus cereus (strain B4264).